A 113-amino-acid polypeptide reads, in one-letter code: Teretoxin Tan14.1 (113 aa).

Positions 1-21 are cleaved as a signal peptide; sequence MALEAQMTLRMFVLVAMASTV. A propeptide spanning residues 22-86 is cleaved from the precursor; it reads HVLSSSFSED…DETSSRTGKR (65 aa).

Belongs to the teretoxin N (TN) superfamily. Post-translationally, contains 2 disulfide bonds. In terms of tissue distribution, expressed by the venom duct.

It localises to the secreted. This is Teretoxin Tan14.1 from Terebra anilis (Auger snail).